The following is a 409-amino-acid chain: Phosphatidylglycerol--prolipoprotein diacylglyceryl transferase (409 aa).

Helical transmembrane passes span 18–38 (PVPLRAYALMIIIGVFVAVFV), 48–68 (MDPMVASEVAYWAVPFGIVGA), 93–113 (IWNGGLGIWGAIAGGAFGAWL), and 119–139 (GISLALFGDAAAPGIILAQAI). Arginine 141 contributes to the a 1,2-diacyl-sn-glycero-3-phospho-(1'-sn-glycerol) binding site. The next 2 membrane-spanning stretches (helical) occupy residues 177–197 (QPTFLYECLWNLVVAGILLVV) and 234–254 (ILGLRVNIWTSIVVCLGALLA). Positions 273–409 (ALGIARSRPA…AVPPEEPQLP (137 aa)) are disordered. Composition is skewed to low complexity over residues 297-309 (AAAPDSAGPDSAA), 320-335 (PDLGGPDPADPGSAGS), and 348-375 (TATTATTATTATTATTATTATTATTATT).

Belongs to the Lgt family.

It localises to the cell membrane. The enzyme catalyses L-cysteinyl-[prolipoprotein] + a 1,2-diacyl-sn-glycero-3-phospho-(1'-sn-glycerol) = an S-1,2-diacyl-sn-glyceryl-L-cysteinyl-[prolipoprotein] + sn-glycerol 1-phosphate + H(+). It participates in protein modification; lipoprotein biosynthesis (diacylglyceryl transfer). Functionally, catalyzes the transfer of the diacylglyceryl group from phosphatidylglycerol to the sulfhydryl group of the N-terminal cysteine of a prolipoprotein, the first step in the formation of mature lipoproteins. This Frankia casuarinae (strain DSM 45818 / CECT 9043 / HFP020203 / CcI3) protein is Phosphatidylglycerol--prolipoprotein diacylglyceryl transferase.